The chain runs to 223 residues: Peptidyl-tRNA hydrolase (223 aa).

Tyrosine 16 provides a ligand contact to tRNA. Residue histidine 21 is the Proton acceptor of the active site. Residues phenylalanine 67, asparagine 69, and asparagine 113 each coordinate tRNA.

Belongs to the PTH family. In terms of assembly, monomer.

The protein resides in the cytoplasm. The catalysed reaction is an N-acyl-L-alpha-aminoacyl-tRNA + H2O = an N-acyl-L-amino acid + a tRNA + H(+). Hydrolyzes ribosome-free peptidyl-tRNAs (with 1 or more amino acids incorporated), which drop off the ribosome during protein synthesis, or as a result of ribosome stalling. Its function is as follows. Catalyzes the release of premature peptidyl moieties from peptidyl-tRNA molecules trapped in stalled 50S ribosomal subunits, and thus maintains levels of free tRNAs and 50S ribosomes. The chain is Peptidyl-tRNA hydrolase from Helicobacter hepaticus (strain ATCC 51449 / 3B1).